Here is a 122-residue protein sequence, read N- to C-terminus: Small ribosomal subunit protein uS13 (122 aa).

The segment at 95–122 is disordered; sequence NLPVRGQRTHTNARTRKGKAKPIAGKKK.

The protein belongs to the universal ribosomal protein uS13 family. Part of the 30S ribosomal subunit. Forms a loose heterodimer with protein S19. Forms two bridges to the 50S subunit in the 70S ribosome.

Located at the top of the head of the 30S subunit, it contacts several helices of the 16S rRNA. In the 70S ribosome it contacts the 23S rRNA (bridge B1a) and protein L5 of the 50S subunit (bridge B1b), connecting the 2 subunits; these bridges are implicated in subunit movement. Contacts the tRNAs in the A and P-sites. The chain is Small ribosomal subunit protein uS13 from Methylobacterium sp. (strain 4-46).